The chain runs to 385 residues: HAT1-interacting factor 1 (385 aa).

The important for interaction with heterotetrameric histone H3 and H4 and for interaction with dimeric histone H2A and H2B stretch occupies residues 80 to 199 (GNLFGDALLA…RKSGFHIYFE (120 aa)). Low complexity-rich tracts occupy residues 85 to 97 (DALL…SGSE) and 105 to 116 (DVSNGEEGNENG). Positions 85–163 (DALLAGDDGS…EEENVEKEEE (79 aa)) are disordered. A compositionally biased stretch (acidic residues) spans 129 to 160 (DQEEEDLTGDVDSGDSEDSGEGSEEEEENVEK). At Ser-174 the chain carries Phosphoserine. TPR repeat units lie at residues 186-220 (VSQL…LGRP), 229-262 (ENSR…YLKA), and 289-322 (ALRW…RPKD). Residues 248-332 (EAEMFSRAIH…SELQQARLAQ (85 aa)) are interaction with dimeric histone H2A and H2B. The tract at residues 340–385 (VQENQQHGSKRPLSQPTTSIGFPALEKPLGDFNDLSQLVKKKPRRH) is disordered. Residues 342 to 359 (ENQQHGSKRPLSQPTTSI) are compositionally biased toward polar residues.

This sequence belongs to the NASP family. In terms of assembly, homodimer. The homodimer interacts with a histone tetramer containing H3 and H4; the interaction is direct. The homodimer interacts with heterodimeric histone H2A and H2B; the interaction is direct. Component of the nuclear histone acetyltransferase B (HAT-B) complex composed of at least HAT1, HAT2 and HIF1. Does not interact with HAT1 in the absence of HAT2. Interacts with histones H3 and H4 in a HAT1/HAT2 dependent manner. Interaction with heterotetrameric histone H3 and H4 precludes interaction with dimeric histone H2A and H2B, irrespective of the fact that their binding involves non-identical regions of the protein.

It localises to the nucleus. Functionally, histone H3 and H4 specific chaperone component of the nuclear histone acetyltransferase B (HAT-B) complex. Involved in chromatin assembly and telomere silencing. This is HAT1-interacting factor 1 (HIF1) from Saccharomyces cerevisiae (strain ATCC 204508 / S288c) (Baker's yeast).